The chain runs to 533 residues: Lysophosphatidylcholine acyltransferase (533 aa).

Topologically, residues 1 to 79 (MTTSTIKPTG…VLTVLLLPIR (79 aa)) are cytoplasmic. A helical; Signal-anchor for type II membrane protein transmembrane segment spans residues 80-100 (VVGCVLSLISAWMFACIGLYG). Residues 101–533 (MTLDDLKAKP…PKAVVTTAEN (433 aa)) lie on the Lumenal side of the membrane. The HXXXXD motif signature appears at 158–163 (HSSYVD). EF-hand domains follow at residues 402–437 (LKNT…CKLK), 439–474 (SDLL…AGGK), and 475–510 (LNEQ…QKSS).

This sequence belongs to the 1-acyl-sn-glycerol-3-phosphate acyltransferase family.

The protein localises to the endoplasmic reticulum membrane. Its subcellular location is the golgi apparatus membrane. The protein resides in the lipid droplet. It carries out the reaction a 1-acyl-sn-glycero-3-phosphocholine + an acyl-CoA = a 1,2-diacyl-sn-glycero-3-phosphocholine + CoA. It functions in the pathway lipid metabolism; phospholipid metabolism. Its function is as follows. Acetyltransferase which mediates the conversion of 1-acyl-sn-glycero-3-phosphocholine (LPC) into phosphatidylcholine (PC). Has a calcium-independent activity. Displays a clear preference for saturated fatty acyl-CoAs, and 1-myristoyl or 1-palmitoyl LPC as acyl donors and acceptors, respectively. Involved in the regulation of lipid droplet number and size. The protein is Lysophosphatidylcholine acyltransferase of Drosophila melanogaster (Fruit fly).